A 351-amino-acid chain; its full sequence is Cytoplasmic dynein 2 light intermediate chain 1 (351 aa).

The tract at residues 304–351 (TLKDVKDPAKDPQYAESEVDEMRIQKDQELEQYKRSSSKSWKQIELDS) is disordered. Residues 323–337 (DEMRIQKDQELEQYK) show a composition bias toward basic and acidic residues.

Belongs to the dynein light intermediate chain family. Light intermediate chain of the cytoplasmic dynein complex 2, a multisubunit complex composed at least of eleven different proteins. The cytoplasmic dynein 2 complex consists of two catalytic heavy chains (HCs) and a number of non-catalytic subunits presented by intermediate chains (ICs), light intermediate chains (LICs) and light chains (LCs). Among them, a heavy chain (DYNC2H1), two intermediate chains (DYNC2I2 and DYNC2I1), a light intermediate chain (DYNC2LI1), and a light chain (DYNLT2B) are unique to the dynein-2 complex, but a subset of light chains are also shared by dynein-1 and dynein-2 complexes. Dynein-2 complex is built around two copies of cytoplasmic dynein 2 heavy chain 1 (DYNC2H1). The C-terminal region forms the motor domain, which converts the energy from ATP hydrolysis into movement. Its N-terminal region forms the tail, an extended structure that binds the other subunits and holds the two heavy chains in a homodimer. Interacts with DYNC2H1 (via N-terminus); this interaction stabilizes the dynein-2 complex structure.

Its subcellular location is the cytoplasm. It is found in the cell projection. It localises to the cilium. The protein resides in the cytoskeleton. The protein localises to the cilium basal body. Its subcellular location is the cilium axoneme. It is found in the microtubule organizing center. It localises to the centrosome. In terms of biological role, acts as one of several non-catalytic accessory components of the cytoplasmic dynein 2 complex (dynein-2 complex), a motor protein complex that drives the movement of cargos along microtubules within cilia and flagella in concert with the intraflagellar transport (IFT) system, facilitating the assembly of these organelles. Involved in the regulation of ciliary length. The protein is Cytoplasmic dynein 2 light intermediate chain 1 (DYNC2LI1) of Bos taurus (Bovine).